Here is a 180-residue protein sequence, read N- to C-terminus: UPF0227 protein YcfP (180 aa).

This sequence belongs to the UPF0227 family.

The polypeptide is UPF0227 protein YcfP (Salmonella arizonae (strain ATCC BAA-731 / CDC346-86 / RSK2980)).